Here is a 924-residue protein sequence, read N- to C-terminus: Bifunctional glutamine synthetase adenylyltransferase/adenylyl-removing enzyme (924 aa).

The interval 1-422 is adenylyl removase; sequence MQTKGCRFFM…QFKKLIQEEV (422 aa). Residues 424 to 924 form an adenylyl transferase region; that stretch reads SPDETDTELE…PASTMALESE (501 aa).

Belongs to the GlnE family. Mg(2+) is required as a cofactor.

It catalyses the reaction [glutamine synthetase]-O(4)-(5'-adenylyl)-L-tyrosine + phosphate = [glutamine synthetase]-L-tyrosine + ADP. It carries out the reaction [glutamine synthetase]-L-tyrosine + ATP = [glutamine synthetase]-O(4)-(5'-adenylyl)-L-tyrosine + diphosphate. Functionally, involved in the regulation of glutamine synthetase GlnA, a key enzyme in the process to assimilate ammonia. When cellular nitrogen levels are high, the C-terminal adenylyl transferase (AT) inactivates GlnA by covalent transfer of an adenylyl group from ATP to specific tyrosine residue of GlnA, thus reducing its activity. Conversely, when nitrogen levels are low, the N-terminal adenylyl removase (AR) activates GlnA by removing the adenylyl group by phosphorolysis, increasing its activity. The regulatory region of GlnE binds the signal transduction protein PII (GlnB) which indicates the nitrogen status of the cell. The chain is Bifunctional glutamine synthetase adenylyltransferase/adenylyl-removing enzyme from Acinetobacter baylyi (strain ATCC 33305 / BD413 / ADP1).